A 436-amino-acid polypeptide reads, in one-letter code: Diaminobutyrate--2-oxoglutarate transaminase (436 aa).

Residue lysine 269 is modified to N6-(pyridoxal phosphate)lysine.

This sequence belongs to the class-III pyridoxal-phosphate-dependent aminotransferase family. It depends on pyridoxal 5'-phosphate as a cofactor.

The catalysed reaction is L-2,4-diaminobutanoate + 2-oxoglutarate = L-aspartate 4-semialdehyde + L-glutamate. The protein operates within amine and polyamine biosynthesis; ectoine biosynthesis; L-ectoine from L-aspartate 4-semialdehyde: step 1/3. Its function is as follows. Catalyzes reversively the conversion of L-aspartate beta-semialdehyde (ASA) to L-2,4-diaminobutyrate (DABA) by transamination with L-glutamate. The sequence is that of Diaminobutyrate--2-oxoglutarate transaminase (ectB) from Nocardia farcinica (strain IFM 10152).